We begin with the raw amino-acid sequence, 233 residues long: Pyridoxal 5'-phosphate synthase subunit PdxT (233 aa).

Position 61-63 (61-63) interacts with L-glutamine; sequence GES. Cys-93 (nucleophile) is an active-site residue. L-glutamine is bound by residues Arg-127 and 163–164; that span reads IR. Active-site charge relay system residues include His-212 and Glu-214.

Belongs to the glutaminase PdxT/SNO family. In terms of assembly, in the presence of PdxS, forms a dodecamer of heterodimers. Only shows activity in the heterodimer.

It carries out the reaction aldehydo-D-ribose 5-phosphate + D-glyceraldehyde 3-phosphate + L-glutamine = pyridoxal 5'-phosphate + L-glutamate + phosphate + 3 H2O + H(+). The enzyme catalyses L-glutamine + H2O = L-glutamate + NH4(+). The protein operates within cofactor biosynthesis; pyridoxal 5'-phosphate biosynthesis. In terms of biological role, catalyzes the hydrolysis of glutamine to glutamate and ammonia as part of the biosynthesis of pyridoxal 5'-phosphate. The resulting ammonia molecule is channeled to the active site of PdxS. This Paenarthrobacter aurescens (strain TC1) protein is Pyridoxal 5'-phosphate synthase subunit PdxT.